The sequence spans 242 residues: ATP synthase subunit a (242 aa).

The next 6 helical transmembrane spans lie at 29–49, 84–104, 114–134, 140–160, 189–209, and 210–230; these read SAAYMLLASVLALTYFYLAFS, FVPVIFTLFVFILFCNLFGMI, IIITFALAILVFLMVTIVGFV, FLSLFLPHGTPLWLAPLMIII, VIASFVVTLMIYLKFLPIPLM, and VILIGFEIFVAILQAYIFTIL.

This sequence belongs to the ATPase A chain family. F-type ATPases have 2 components, CF(1) - the catalytic core - and CF(0) - the membrane proton channel. CF(1) has five subunits: alpha(3), beta(3), gamma(1), delta(1), epsilon(1). CF(0) has three main subunits: a(1), b(2) and c(9-12). The alpha and beta chains form an alternating ring which encloses part of the gamma chain. CF(1) is attached to CF(0) by a central stalk formed by the gamma and epsilon chains, while a peripheral stalk is formed by the delta and b chains.

It is found in the cell inner membrane. In terms of biological role, key component of the proton channel; it plays a direct role in the translocation of protons across the membrane. The sequence is that of ATP synthase subunit a from Rickettsia bellii (strain RML369-C).